The chain runs to 159 residues: Phosphopantetheine adenylyltransferase (159 aa).

Residue Thr10 coordinates substrate. Residues 10–11 and His18 each bind ATP; that span reads TF. 3 residues coordinate substrate: Lys42, Met74, and Arg88. ATP-binding positions include 89–91, Glu99, and 124–130; these read GLR and WSFISSS.

It belongs to the bacterial CoaD family. In terms of assembly, homohexamer. Mg(2+) serves as cofactor.

The protein localises to the cytoplasm. The enzyme catalyses (R)-4'-phosphopantetheine + ATP + H(+) = 3'-dephospho-CoA + diphosphate. It participates in cofactor biosynthesis; coenzyme A biosynthesis; CoA from (R)-pantothenate: step 4/5. Its function is as follows. Reversibly transfers an adenylyl group from ATP to 4'-phosphopantetheine, yielding dephospho-CoA (dPCoA) and pyrophosphate. The protein is Phosphopantetheine adenylyltransferase of Escherichia coli (strain SMS-3-5 / SECEC).